Reading from the N-terminus, the 216-residue chain is Outer-membrane lipoprotein LolB (216 aa).

Residues 1–21 (MLIFKICFYRLLPLSVLLLAA) form the signal peptide. C22 is lipidated: N-palmitoyl cysteine. Residue C22 is the site of S-diacylglycerol cysteine attachment.

This sequence belongs to the LolB family. As to quaternary structure, monomer.

It is found in the cell outer membrane. Its function is as follows. Plays a critical role in the incorporation of lipoproteins in the outer membrane after they are released by the LolA protein. The polypeptide is Outer-membrane lipoprotein LolB (Hamiltonella defensa subsp. Acyrthosiphon pisum (strain 5AT)).